The chain runs to 1007 residues: Beta-galactosidase A (1007 aa).

The first 18 residues, 1–18, serve as a signal peptide directing secretion; it reads MKLSSACAIALLAAQAAG. Substrate contacts are provided by residues Y96 and 140-142; that span reads NAE. The N-linked (GlcNAc...) asparagine glycan is linked to N156. Residue N199 coordinates substrate. E200 (proton donor) is an active-site residue. 2 disulfide bridges follow: C205–C206 and C266–C315. The Nucleophile role is filled by E298. A substrate-binding site is contributed by Y364. N402, N422, N478, N522, N622, N739, N760, N777, N805, and N914 each carry an N-linked (GlcNAc...) asparagine glycan.

This sequence belongs to the glycosyl hydrolase 35 family.

It is found in the secreted. The enzyme catalyses Hydrolysis of terminal non-reducing beta-D-galactose residues in beta-D-galactosides.. Functionally, cleaves beta-linked terminal galactosyl residues from gangliosides, glycoproteins, and glycosaminoglycans. In Aspergillus niger (strain ATCC MYA-4892 / CBS 513.88 / FGSC A1513), this protein is Beta-galactosidase A (lacA).